Here is a 202-residue protein sequence, read N- to C-terminus: Glycerol-3-phosphate acyltransferase (202 aa).

The next 6 helical transmembrane spans lie at M2–I22, F54–L74, F85–Y105, V120–L140, K141–S161, and L162–I182.

Belongs to the PlsY family. As to quaternary structure, probably interacts with PlsX.

Its subcellular location is the cell membrane. It catalyses the reaction an acyl phosphate + sn-glycerol 3-phosphate = a 1-acyl-sn-glycero-3-phosphate + phosphate. It participates in lipid metabolism; phospholipid metabolism. Functionally, catalyzes the transfer of an acyl group from acyl-phosphate (acyl-PO(4)) to glycerol-3-phosphate (G3P) to form lysophosphatidic acid (LPA). This enzyme utilizes acyl-phosphate as fatty acyl donor, but not acyl-CoA or acyl-ACP. This chain is Glycerol-3-phosphate acyltransferase, found in Staphylococcus aureus (strain USA300).